The primary structure comprises 249 residues: 5'-nucleotidase SurE (249 aa).

Positions 9, 10, 40, and 92 each coordinate a divalent metal cation.

Belongs to the SurE nucleotidase family. The cofactor is a divalent metal cation.

Its subcellular location is the cytoplasm. The catalysed reaction is a ribonucleoside 5'-phosphate + H2O = a ribonucleoside + phosphate. Nucleotidase that shows phosphatase activity on nucleoside 5'-monophosphates. This is 5'-nucleotidase SurE from Shewanella frigidimarina (strain NCIMB 400).